Reading from the N-terminus, the 87-residue chain is Sec-independent protein translocase protein TatA (87 aa).

Residues 1–21 (MGSFSITHWLILLVVVVVVFG) form a helical membrane-spanning segment. The segment at 56–87 (VLDHDAGTNPPNITGTQSDTTSANKVDDTHNV) is disordered. The segment covering 64-79 (NPPNITGTQSDTTSAN) has biased composition (polar residues).

It belongs to the TatA/E family. In terms of assembly, the Tat system comprises two distinct complexes: a TatABC complex, containing multiple copies of TatA, TatB and TatC subunits, and a separate TatA complex, containing only TatA subunits. Substrates initially bind to the TatABC complex, which probably triggers association of the separate TatA complex to form the active translocon.

Its subcellular location is the cell inner membrane. Part of the twin-arginine translocation (Tat) system that transports large folded proteins containing a characteristic twin-arginine motif in their signal peptide across membranes. TatA could form the protein-conducting channel of the Tat system. The sequence is that of Sec-independent protein translocase protein TatA from Psychrobacter arcticus (strain DSM 17307 / VKM B-2377 / 273-4).